Consider the following 160-residue polypeptide: NADH-quinone oxidoreductase subunit B (160 aa).

4 residues coordinate [4Fe-4S] cluster: Cys37, Cys38, Cys102, and Cys132.

This sequence belongs to the complex I 20 kDa subunit family. NDH-1 is composed of 14 different subunits. Subunits NuoB, C, D, E, F, and G constitute the peripheral sector of the complex. Requires [4Fe-4S] cluster as cofactor.

It is found in the cell inner membrane. The catalysed reaction is a quinone + NADH + 5 H(+)(in) = a quinol + NAD(+) + 4 H(+)(out). NDH-1 shuttles electrons from NADH, via FMN and iron-sulfur (Fe-S) centers, to quinones in the respiratory chain. Couples the redox reaction to proton translocation (for every two electrons transferred, four hydrogen ions are translocated across the cytoplasmic membrane), and thus conserves the redox energy in a proton gradient. This chain is NADH-quinone oxidoreductase subunit B, found in Neisseria gonorrhoeae (strain NCCP11945).